Reading from the N-terminus, the 152-residue chain is Lipoprotein signal peptidase (152 aa).

3 helical membrane-spanning segments follow: residues 5 to 25 (LFVLSLILLVALDQLSKFWIV), 61 to 81 (WFFVAITVLVIGYAIYYLATH), and 84 to 104 (LNIWKQLALLLIISGGIGNFI). Catalysis depends on residues D114 and D130. Residues 125-145 (IFNVADSYLTVGVILLVICLW) form a helical membrane-spanning segment.

The protein belongs to the peptidase A8 family.

Its subcellular location is the cell membrane. The enzyme catalyses Release of signal peptides from bacterial membrane prolipoproteins. Hydrolyzes -Xaa-Yaa-Zaa-|-(S,diacylglyceryl)Cys-, in which Xaa is hydrophobic (preferably Leu), and Yaa (Ala or Ser) and Zaa (Gly or Ala) have small, neutral side chains.. Its pathway is protein modification; lipoprotein biosynthesis (signal peptide cleavage). In terms of biological role, this protein specifically catalyzes the removal of signal peptides from prolipoproteins. This is Lipoprotein signal peptidase from Streptococcus pyogenes serotype M6 (strain ATCC BAA-946 / MGAS10394).